The sequence spans 391 residues: 8-amino-7-oxononanoate synthase (391 aa).

Arg-24 is a substrate binding site. 112–113 lines the pyridoxal 5'-phosphate pocket; sequence GY. His-137 is a binding site for substrate. Pyridoxal 5'-phosphate-binding residues include Ser-183, His-211, and Thr-240. Lys-243 bears the N6-(pyridoxal phosphate)lysine mark. Thr-357 lines the substrate pocket.

Belongs to the class-II pyridoxal-phosphate-dependent aminotransferase family. BioF subfamily. Homodimer. Pyridoxal 5'-phosphate serves as cofactor.

It catalyses the reaction 6-carboxyhexanoyl-[ACP] + L-alanine + H(+) = (8S)-8-amino-7-oxononanoate + holo-[ACP] + CO2. The protein operates within cofactor biosynthesis; biotin biosynthesis. Catalyzes the decarboxylative condensation of pimeloyl-[acyl-carrier protein] and L-alanine to produce 8-amino-7-oxononanoate (AON), [acyl-carrier protein], and carbon dioxide. The chain is 8-amino-7-oxononanoate synthase from Alkalilimnicola ehrlichii (strain ATCC BAA-1101 / DSM 17681 / MLHE-1).